The primary structure comprises 156 residues: Xanthocillin biosynthesis cluster protein D (156 aa).

Asn-107 and Asn-120 each carry an N-linked (GlcNAc...) asparagine glycan. Residues 131-153 (IHLNAIALVATVWYGFTLSSSLL) traverse the membrane as a helical segment.

It is found in the membrane. It functions in the pathway secondary metabolite biosynthesis. In terms of biological role, part of the gene cluster that mediates the biosynthesis of the isocyanide xanthocillin and its derivatives. The first step of the pathway consists in the conversion of tyrosine into a vinyl-isonitrile intermediate by the isocyanide synthase xanB. Subsequent oxidative dimerization of this intermediate to form xanthocillin may involve the cytochrome P450 monooxygenase xanG, whose expression is coregulated with that of XanB. Xanthocillin can be further modified by the isonitrile hydratase-like protein xanA which introduces N-formyl groups and the methyltransferase xanE which introduces methyl groups, leading to the production of several derivatives including fumiformamide. Finally, fumiformamide can be subject to both oxidative and reductive cyclization to yield melanocins E and F, respectively. The protein is Xanthocillin biosynthesis cluster protein D of Aspergillus fumigatus (strain ATCC MYA-4609 / CBS 101355 / FGSC A1100 / Af293) (Neosartorya fumigata).